Here is a 681-residue protein sequence, read N- to C-terminus: Methionine--tRNA ligase (681 aa).

The 'HIGH' region motif lies at 15-25; the sequence is PYANGPIHLGH. Zn(2+) contacts are provided by Cys146, Cys149, Cys159, and Cys162. Positions 332-336 match the 'KMSKS' region motif; sequence KMSKS. ATP is bound at residue Lys335. The tract at residues 547 to 569 is disordered; the sequence is DNMAQAPKDNGKAKKDKKEAKSE. Over residues 555–569 the composition is skewed to basic and acidic residues; that stretch reads DNGKAKKDKKEAKSE. One can recognise a tRNA-binding domain in the interval 580–681; the sequence is DFAKIDLRIA…SGAQPGMQVK (102 aa).

Belongs to the class-I aminoacyl-tRNA synthetase family. MetG type 1 subfamily. In terms of assembly, homodimer. Zn(2+) is required as a cofactor.

It localises to the cytoplasm. The enzyme catalyses tRNA(Met) + L-methionine + ATP = L-methionyl-tRNA(Met) + AMP + diphosphate. In terms of biological role, is required not only for elongation of protein synthesis but also for the initiation of all mRNA translation through initiator tRNA(fMet) aminoacylation. In Hahella chejuensis (strain KCTC 2396), this protein is Methionine--tRNA ligase.